The following is a 189-amino-acid chain: Molybdopterin synthase catalytic subunit (189 aa).

Polar residues predominate over residues 1–30 (MSSLEISNSCFSPETRSPSSRQSVEDNASE). The disordered stretch occupies residues 1–41 (MSSLEISNSCFSPETRSPSSRQSVEDNASEPSGKDVDDVQE). Phosphoserine is present on Ser-20. Basic and acidic residues predominate over residues 32 to 41 (SGKDVDDVQE). Substrate is bound by residues 143 to 144 (HR), Lys-159, and 166 to 168 (KKE).

The protein belongs to the MoaE family. MOCS2B subfamily. As to quaternary structure, heterotetramer; composed of 2 small (MOCS2A) and 2 large (MOCS2B) subunits.

It localises to the cytoplasm. The protein localises to the cytosol. The catalysed reaction is 2 [molybdopterin-synthase sulfur-carrier protein]-C-terminal-Gly-aminoethanethioate + cyclic pyranopterin phosphate + H2O = molybdopterin + 2 [molybdopterin-synthase sulfur-carrier protein]-C-terminal Gly-Gly + 2 H(+). It functions in the pathway cofactor biosynthesis; molybdopterin biosynthesis. Catalytic subunit of the molybdopterin synthase complex, a complex that catalyzes the conversion of precursor Z into molybdopterin. Acts by mediating the incorporation of 2 sulfur atoms from thiocarboxylated MOCS2A into precursor Z to generate a dithiolene group. This chain is Molybdopterin synthase catalytic subunit, found in Mus musculus (Mouse).